The sequence spans 335 residues: Glyceraldehyde-3-phosphate dehydrogenase (335 aa).

NAD(+)-binding positions include 13–14 and Gly111; that span reads TI. Position 140–142 (140–142) interacts with D-glyceraldehyde 3-phosphate; that stretch reads SCN. The active-site Nucleophile is Cys141. Position 169 (Arg169) interacts with NAD(+). Residues Thr171 and 195–196 contribute to the D-glyceraldehyde 3-phosphate site; that span reads HG. An NAD(+)-binding site is contributed by Gln300.

The protein belongs to the glyceraldehyde-3-phosphate dehydrogenase family. As to quaternary structure, homotetramer.

It is found in the cytoplasm. The enzyme catalyses D-glyceraldehyde 3-phosphate + phosphate + NADP(+) = (2R)-3-phospho-glyceroyl phosphate + NADPH + H(+). It catalyses the reaction D-glyceraldehyde 3-phosphate + phosphate + NAD(+) = (2R)-3-phospho-glyceroyl phosphate + NADH + H(+). The protein operates within carbohydrate degradation; glycolysis; pyruvate from D-glyceraldehyde 3-phosphate: step 1/5. The protein is Glyceraldehyde-3-phosphate dehydrogenase of Methanosarcina mazei (strain ATCC BAA-159 / DSM 3647 / Goe1 / Go1 / JCM 11833 / OCM 88) (Methanosarcina frisia).